The sequence spans 513 residues: Putative GMP synthase [glutamine-hydrolyzing] (513 aa).

Residues 8–198 (MIVVLDFGGQ…AFAVCGCEGN (191 aa)) form the Glutamine amidotransferase type-1 domain. The active-site Nucleophile is the C85. Residue E174 is part of the active site. The 190-residue stretch at 199-388 (WSMENFIELE…LGIPDEVVWR (190 aa)) folds into the GMPS ATP-PPase domain. 226 to 232 (SGGVDSS) provides a ligand contact to ATP.

Homodimer.

The catalysed reaction is XMP + L-glutamine + ATP + H2O = GMP + L-glutamate + AMP + diphosphate + 2 H(+). It participates in purine metabolism; GMP biosynthesis; GMP from XMP (L-Gln route): step 1/1. Its function is as follows. Catalyzes the synthesis of GMP from XMP. The polypeptide is Putative GMP synthase [glutamine-hydrolyzing] (guaA) (Halalkalibacterium halodurans (strain ATCC BAA-125 / DSM 18197 / FERM 7344 / JCM 9153 / C-125) (Bacillus halodurans)).